A 166-amino-acid polypeptide reads, in one-letter code: MENKNLLSIGKIVNTFGIKGAVKIALEKSIEVNDINGIKLLFIENTNNVIIPKQVESISMQKSHLVVYFKEHNHINEVEIFKGKKVKYLNDNDAFSIFYDLTYYSVVYNKQNGKVIETMFNGNHDLVKVLLENEEKAFWVPLVDVYTNNIDDESRIITLKNIEGLK.

Residues 90–165 (NDNDAFSIFY…IITLKNIEGL (76 aa)) enclose the PRC barrel domain.

This sequence belongs to the RimM family. In terms of assembly, binds ribosomal protein uS19.

The protein resides in the cytoplasm. In terms of biological role, an accessory protein needed during the final step in the assembly of 30S ribosomal subunit, possibly for assembly of the head region. Essential for efficient processing of 16S rRNA. May be needed both before and after RbfA during the maturation of 16S rRNA. It has affinity for free ribosomal 30S subunits but not for 70S ribosomes. The protein is Ribosome maturation factor RimM of Mesoplasma florum (strain ATCC 33453 / NBRC 100688 / NCTC 11704 / L1) (Acholeplasma florum).